A 196-amino-acid polypeptide reads, in one-letter code: ATP-dependent Clp protease proteolytic subunit (196 aa).

The active-site Nucleophile is S101. Residue H126 is part of the active site.

This sequence belongs to the peptidase S14 family. As to quaternary structure, component of the chloroplastic Clp protease core complex.

The protein localises to the plastid. It is found in the chloroplast stroma. It catalyses the reaction Hydrolysis of proteins to small peptides in the presence of ATP and magnesium. alpha-casein is the usual test substrate. In the absence of ATP, only oligopeptides shorter than five residues are hydrolyzed (such as succinyl-Leu-Tyr-|-NHMec, and Leu-Tyr-Leu-|-Tyr-Trp, in which cleavage of the -Tyr-|-Leu- and -Tyr-|-Trp bonds also occurs).. Functionally, cleaves peptides in various proteins in a process that requires ATP hydrolysis. Has a chymotrypsin-like activity. Plays a major role in the degradation of misfolded proteins. This chain is ATP-dependent Clp protease proteolytic subunit, found in Lobularia maritima (Sweet alyssum).